The following is a 238-amino-acid chain: 15,16-dihydrobiliverdin:ferredoxin oxidoreductase (238 aa).

The protein belongs to the HY2 family.

The enzyme catalyses 15,16-dihydrobiliverdin + oxidized 2[4Fe-4S]-[ferredoxin] = biliverdin IXalpha + reduced 2[4Fe-4S]-[ferredoxin] + 2 H(+). Catalyzes the two-electron reduction of biliverdin IX-alpha at the C15 methine bridge. The polypeptide is 15,16-dihydrobiliverdin:ferredoxin oxidoreductase (Prochlorococcus marinus (strain MIT 9211)).